The chain runs to 289 residues: N-acetylmuramoyl-L-alanine amidase AmiA (289 aa).

The segment at residues 1 to 34 is a signal peptide (tat-type signal); sequence MSTFKLLKTLTSRRQVLKTGLAALTLSGMSHAVA. The disordered stretch occupies residues 36 to 61; it reads EETLKTSNGHSKPKTKKTGSKRLVML. Positions 46 to 55 are enriched in basic residues; the sequence is SKPKTKKTGS. Residues 59 to 273 enclose the MurNAc-LAA domain; that stretch reads VMLDPGHGGI…IATAIANGII (215 aa).

This sequence belongs to the N-acetylmuramoyl-L-alanine amidase 3 family. In terms of processing, predicted to be exported by the Tat system. The position of the signal peptide cleavage has not been experimentally proven.

The protein localises to the periplasm. The catalysed reaction is Hydrolyzes the link between N-acetylmuramoyl residues and L-amino acid residues in certain cell-wall glycopeptides.. Functionally, cell-wall hydrolase involved in septum cleavage during cell division. This is N-acetylmuramoyl-L-alanine amidase AmiA (amiA) from Salmonella typhimurium (strain LT2 / SGSC1412 / ATCC 700720).